A 398-amino-acid chain; its full sequence is Acetate kinase (398 aa).

Mg(2+) is bound at residue N7. Position 14 (K14) interacts with ATP. R96 provides a ligand contact to substrate. The Proton donor/acceptor role is filled by D153. ATP is bound by residues 210–214, 284–286, and 332–336; these read HLGNG, DLR, and GIGEH. Residue E385 coordinates Mg(2+).

Belongs to the acetokinase family. In terms of assembly, homodimer. The cofactor is Mg(2+). It depends on Mn(2+) as a cofactor.

The protein localises to the cytoplasm. It carries out the reaction acetate + ATP = acetyl phosphate + ADP. The protein operates within metabolic intermediate biosynthesis; acetyl-CoA biosynthesis; acetyl-CoA from acetate: step 1/2. In terms of biological role, catalyzes the formation of acetyl phosphate from acetate and ATP. Can also catalyze the reverse reaction. This is Acetate kinase from Acaryochloris marina (strain MBIC 11017).